The following is a 489-amino-acid chain: MSEELKGEARYKSGVMPYKKMGYWDSDYVPKDTDVIALFRITPQEGVDHEEAAAAVAGESSTATWTVVWTDRLTACELYRAKAYRSELVPNTGPGTKNEAQYFAYIAYDLDLFEGGSIANLTASIIGNVFGFKAVKALRLEDMRIPVAYLKTFQGPATGIVVERERLDKFGRHXLGATTKPKLGLSGRNYGRVVYEGLKGGLDFMKDDENINSQPFMHWRDRFLYCMEAVNKASAATGEVKGHYLNVTAGTMEEMYERAEFAKSLGSVVVMIDLVIGYTAIQSMAKWSRKNDMILHLHRAGNSTYSRQKNHGMNFRVICKWMRMAGVDHIHAGTVVGKLEGDPLMIKGFYDTLRDTHSAKNLETGLFFDQDWASLNKVMPVASGGIHAGQMHQLLDYLGEDVILQFGGGTIGHPMGIQAGAVANRVALEAMILARNEGRDYVKEGPQILQTAAKWCTPLKQALDTWKDITFNYESTDTADFVPSTTASV.

Substrate is bound by residues N128 and T178. The active-site Proton acceptor is K180. Position 182 (K182) interacts with substrate. Residues K206, D208, and E209 each contribute to the Mg(2+) site. At K206 the chain carries N6-carboxylysine. H298 functions as the Proton acceptor in the catalytic mechanism. Residues R299, H331, and S383 each contribute to the substrate site.

This sequence belongs to the RuBisCO large chain family. Type I subfamily. Heterohexadecamer of 8 large chains and 8 small chains. Mg(2+) is required as a cofactor.

The enzyme catalyses 2 (2R)-3-phosphoglycerate + 2 H(+) = D-ribulose 1,5-bisphosphate + CO2 + H2O. It carries out the reaction D-ribulose 1,5-bisphosphate + O2 = 2-phosphoglycolate + (2R)-3-phosphoglycerate + 2 H(+). RuBisCO catalyzes two reactions: the carboxylation of D-ribulose 1,5-bisphosphate, the primary event in carbon dioxide fixation, as well as the oxidative fragmentation of the pentose substrate. Both reactions occur simultaneously and in competition at the same active site. In Nitrosospira sp. (strain 40KI), this protein is Ribulose bisphosphate carboxylase large chain.